The chain runs to 209 residues: Pyridoxine/pyridoxamine 5'-phosphate oxidase (209 aa).

Substrate is bound by residues Arg-7–Tyr-10 and Lys-64. FMN is bound by residues Arg-59–Lys-64, Phe-74–Thr-75, Arg-80, and Lys-81. Substrate contacts are provided by Tyr-121, Arg-125, and Ser-129. FMN contacts are provided by residues Gln-138 to Ser-139 and Trp-182. Arg-188–His-190 contributes to the substrate binding site. FMN is bound at residue Arg-192.

This sequence belongs to the pyridoxamine 5'-phosphate oxidase family. As to quaternary structure, homodimer. Requires FMN as cofactor.

The catalysed reaction is pyridoxamine 5'-phosphate + O2 + H2O = pyridoxal 5'-phosphate + H2O2 + NH4(+). The enzyme catalyses pyridoxine 5'-phosphate + O2 = pyridoxal 5'-phosphate + H2O2. It functions in the pathway cofactor metabolism; pyridoxal 5'-phosphate salvage; pyridoxal 5'-phosphate from pyridoxamine 5'-phosphate: step 1/1. It participates in cofactor metabolism; pyridoxal 5'-phosphate salvage; pyridoxal 5'-phosphate from pyridoxine 5'-phosphate: step 1/1. Its function is as follows. Catalyzes the oxidation of either pyridoxine 5'-phosphate (PNP) or pyridoxamine 5'-phosphate (PMP) into pyridoxal 5'-phosphate (PLP). This Actinobacillus pleuropneumoniae serotype 3 (strain JL03) protein is Pyridoxine/pyridoxamine 5'-phosphate oxidase.